Here is a 386-residue protein sequence, read N- to C-terminus: Putative gustatory receptor 92a (386 aa).

Residues 1–14 are Cytoplasmic-facing; that stretch reads MFEFLHQMSAPKLS. The chain crosses the membrane as a helical span at residues 15-35; it reads TSILRYIFRYAQFIGVIFFCL. Residues 36–79 lie on the Extracellular side of the membrane; that stretch reads HTRKDDKTVFIRNWLKWLNVTHRIITFTRFFWVYIASISIKTNR. Asparagine 54 is a glycosylation site (N-linked (GlcNAc...) asparagine). Residues 80–100 form a helical membrane-spanning segment; sequence VLQVLHGMRLVLSIPNVAVIL. Residues 101–141 are Cytoplasmic-facing; that stretch reads CYHIFRGPEIIDLINQFLRLFRQVSDLFKTKTPGFGGRREL. The helical transmembrane segment at 142 to 162 threads the bilayer; that stretch reads ILILLNLISFAHEQTYLWFTI. Residues 163-169 lie on the Extracellular side of the membrane; sequence RKGFSWR. A helical membrane pass occupies residues 170–190; the sequence is FLIDWWCDFYLVSATNIFIHI. Residues 191 to 256 lie on the Cytoplasmic side of the membrane; that stretch reads NSIGYLSLGV…YHTSIMFHKL (66 aa). A helical transmembrane segment spans residues 257–277; sequence FVPLLFLALIYKVLLIALIGF. Topologically, residues 278 to 287 are extracellular; that stretch reads NVAVEFYLNS. Residues 288-308 form a helical membrane-spanning segment; that stretch reads FIFWILLGKHVLDLFLVTVSV. Residues 309–356 are Cytoplasmic-facing; it reads EGAVNQFLNIGMQFGNVGDLSKFQTTLDTLFLHLRLGHFRVSILGLFD. The helical transmembrane segment at 357–377 threads the bilayer; it reads VTQMQYLQFLSALLSGLAFIA. The Extracellular portion of the chain corresponds to 378-386; that stretch reads QYRMQVGNG.

It belongs to the insect chemoreceptor superfamily. Gustatory receptor (GR) family. Gr93a subfamily.

The protein resides in the cell membrane. In terms of biological role, probable gustatory receptor which mediates acceptance or avoidance behavior, depending on its substrates. The chain is Putative gustatory receptor 92a (Gr92a) from Drosophila melanogaster (Fruit fly).